The chain runs to 417 residues: Serine hydroxymethyltransferase (417 aa).

Residues Leu-121 and 125–127 each bind (6S)-5,6,7,8-tetrahydrofolate; that span reads GHL. Lys-230 carries the post-translational modification N6-(pyridoxal phosphate)lysine. Residue 355 to 357 coordinates (6S)-5,6,7,8-tetrahydrofolate; sequence SPF.

Belongs to the SHMT family. As to quaternary structure, homodimer. It depends on pyridoxal 5'-phosphate as a cofactor.

The protein localises to the cytoplasm. The enzyme catalyses (6R)-5,10-methylene-5,6,7,8-tetrahydrofolate + glycine + H2O = (6S)-5,6,7,8-tetrahydrofolate + L-serine. The protein operates within one-carbon metabolism; tetrahydrofolate interconversion. Its pathway is amino-acid biosynthesis; glycine biosynthesis; glycine from L-serine: step 1/1. In terms of biological role, catalyzes the reversible interconversion of serine and glycine with tetrahydrofolate (THF) serving as the one-carbon carrier. This reaction serves as the major source of one-carbon groups required for the biosynthesis of purines, thymidylate, methionine, and other important biomolecules. Also exhibits THF-independent aldolase activity toward beta-hydroxyamino acids, producing glycine and aldehydes, via a retro-aldol mechanism. This chain is Serine hydroxymethyltransferase, found in Legionella pneumophila subsp. pneumophila (strain Philadelphia 1 / ATCC 33152 / DSM 7513).